Here is a 284-residue protein sequence, read N- to C-terminus: Tropomyosin (284 aa).

Residues 1-284 (MDAIKKKMLA…DSTFAELAGY (284 aa)) adopt a coiled-coil conformation. Positions 105–131 (RLQSATEKLEEASKAADESERGRKVLE) are disordered.

The protein belongs to the tropomyosin family. In terms of assembly, homodimer.

In terms of biological role, tropomyosin, in association with the troponin complex, plays a central role in the calcium dependent regulation of muscle contraction. In Cornu aspersum (Brown garden snail), this protein is Tropomyosin.